Reading from the N-terminus, the 474-residue chain is Ribulose bisphosphate carboxylase large chain (474 aa).

Pro-2 carries the N-acetylproline modification. At Lys-13 the chain carries N6,N6,N6-trimethyllysine. 2 residues coordinate substrate: Asn-122 and Thr-172. The active-site Proton acceptor is Lys-174. Position 176 (Lys-176) interacts with substrate. Mg(2+) contacts are provided by Lys-200, Asp-202, and Glu-203. The residue at position 200 (Lys-200) is an N6-carboxylysine. The active-site Proton acceptor is His-293. The substrate site is built by Arg-294, His-326, and Ser-378.

This sequence belongs to the RuBisCO large chain family. Type I subfamily. As to quaternary structure, heterohexadecamer of 8 large chains and 8 small chains; disulfide-linked. The disulfide link is formed within the large subunit homodimers. Mg(2+) serves as cofactor. Post-translationally, the disulfide bond which can form in the large chain dimeric partners within the hexadecamer appears to be associated with oxidative stress and protein turnover.

The protein localises to the plastid. It is found in the chloroplast. It catalyses the reaction 2 (2R)-3-phosphoglycerate + 2 H(+) = D-ribulose 1,5-bisphosphate + CO2 + H2O. The catalysed reaction is D-ribulose 1,5-bisphosphate + O2 = 2-phosphoglycolate + (2R)-3-phosphoglycerate + 2 H(+). Its function is as follows. RuBisCO catalyzes two reactions: the carboxylation of D-ribulose 1,5-bisphosphate, the primary event in carbon dioxide fixation, as well as the oxidative fragmentation of the pentose substrate in the photorespiration process. Both reactions occur simultaneously and in competition at the same active site. The polypeptide is Ribulose bisphosphate carboxylase large chain (Oltmannsiellopsis viridis (Marine flagellate)).